The chain runs to 294 residues: Protease HtpX (294 aa).

Transmembrane regions (helical) follow at residues 4 to 24 (ILLF…ILFI) and 33 to 53 (FGLI…SLLL). Residue histidine 139 coordinates Zn(2+). Glutamate 140 is an active-site residue. Histidine 143 serves as a coordination point for Zn(2+). The next 2 helical transmembrane spans lie at 147–167 (GDMI…IFLS) and 197–217 (FFIS…ITFW). Glutamate 223 contributes to the Zn(2+) binding site.

Belongs to the peptidase M48B family. It depends on Zn(2+) as a cofactor.

The protein localises to the cell membrane. In Wigglesworthia glossinidia brevipalpis, this protein is Protease HtpX.